The primary structure comprises 512 residues: PTS system mannitol-specific EIICB component (512 aa).

Topologically, residues 1-28 are cytoplasmic; sequence MSQTEEKKGIGRRVQAFGSFLSSMIMPN. The region spanning 17-349 is the PTS EIIC type-2 domain; that stretch reads FGSFLSSMIM…MKFTREPKQD (333 aa). A helical membrane pass occupies residues 29–50; it reads IGAFIAWGFIAAIFIDNGWLPN. Topologically, residues 51-54 are extracellular; it reads KDLA. Residues 55-75 traverse the membrane as a helical segment; it reads TLAGPMITYLIPLLIAFSGGR. The Cytoplasmic portion of the chain corresponds to 76–139; the sequence is LIYDLRGGII…QGFEMLFNNF (64 aa). The helical transmembrane segment at 140-161 threads the bilayer; it reads SAGILGFIMTIAGFKILAPLMK. Residues 162–170 are Extracellular-facing; it reads FIMHILSVA. Residues 171 to 191 traverse the membrane as a helical segment; it reads VEALVHAHLLPLVSILVEPAK. Residues 192 to 278 are Cytoplasmic-facing; it reads IVFLNNAINH…VLMRPLLFIA (87 aa). A helical membrane pass occupies residues 279–298; it reads VILGGMTGVATYQATGFGFK. Residues 299 to 318 lie on the Extracellular side of the membrane; sequence SPASPGSFIVYCLNAPRGEF. The chain crosses the membrane as a helical span at residues 319–340; the sequence is LHMLLGVFLAALVSFVVAALIM. Over 341–512 the chain is Cytoplasmic; sequence KFTREPKQDL…LNNLKKDDQA (172 aa). Positions 355–402 are disordered; the sequence is AQMENTKGKKSSVASKLVSSDKNVNTEENASGNVSETSSSDDDPEALL. The segment covering 365–376 has biased composition (low complexity); it reads SSVASKLVSSDK. Polar residues predominate over residues 380-392; it reads TEENASGNVSETS. The 94-residue stretch at 419-512 folds into the PTS EIIB type-2 domain; it reads NHVIFACDAG…LNNLKKDDQA (94 aa). Cysteine 425 serves as the catalytic Phosphocysteine intermediate; for EIIB activity. At cysteine 425 the chain carries Phosphocysteine; by EIIA.

Homodimer.

The protein localises to the cell membrane. The catalysed reaction is D-mannitol(out) + N(pros)-phospho-L-histidyl-[protein] = D-mannitol 1-phosphate(in) + L-histidyl-[protein]. Its function is as follows. The phosphoenolpyruvate-dependent sugar phosphotransferase system (sugar PTS), a major carbohydrate active transport system, catalyzes the phosphorylation of incoming sugar substrates concomitantly with their translocation across the cell membrane. The enzyme II CmtAB PTS system is involved in D-mannitol transport. The polypeptide is PTS system mannitol-specific EIICB component (mtlA) (Staphylococcus aureus (strain COL)).